The following is a 107-amino-acid chain: Ferredoxin CarAc (107 aa).

One can recognise a Rieske domain in the interval 6–102 (LKVCAASDMQ…VEVKEGEVYV (97 aa)). Cys-46, His-48, Cys-65, and His-68 together coordinate [2Fe-2S] cluster.

In terms of assembly, monomer. Carbazole 1,9a-dioxygenase complex consists of a terminal oxygenase component CarAa, a ferredoxin reductase component CarAd and a ferredoxin component CarAc. The cofactor is [2Fe-2S] cluster.

Part of the multicomponent carbazole 1,9a-dioxygenase (CARDO), that converts carbazole (CAR) into 2-aminobiphenyl-2,3-diol. Acts as a mediator in the electron transfer from CarAd to CarAa. This chain is Ferredoxin CarAc (carAc), found in Metapseudomonas resinovorans (Pseudomonas resinovorans).